Consider the following 163-residue polypeptide: Deoxyuridine 5'-triphosphate nucleotidohydrolase (163 aa).

Substrate contacts are provided by residues R78–G80, N91, and T95–D97. Residues E140–D151 show a composition bias toward basic and acidic residues. Residues E140 to P163 are disordered.

This sequence belongs to the dUTPase family. Mg(2+) serves as cofactor.

The enzyme catalyses dUTP + H2O = dUMP + diphosphate + H(+). The protein operates within pyrimidine metabolism; dUMP biosynthesis; dUMP from dCTP (dUTP route): step 2/2. In terms of biological role, this enzyme is involved in nucleotide metabolism: it produces dUMP, the immediate precursor of thymidine nucleotides and it decreases the intracellular concentration of dUTP so that uracil cannot be incorporated into DNA. This is Deoxyuridine 5'-triphosphate nucleotidohydrolase from Heliobacterium modesticaldum (strain ATCC 51547 / Ice1).